The sequence spans 698 residues: Elongation factor G 2 (698 aa).

The region spanning Glu-8–Val-290 is the tr-type G domain. GTP is bound by residues Ala-17–Thr-24, Asp-88–His-92, and Asn-142–Asp-145.

It belongs to the TRAFAC class translation factor GTPase superfamily. Classic translation factor GTPase family. EF-G/EF-2 subfamily.

The protein resides in the cytoplasm. Functionally, catalyzes the GTP-dependent ribosomal translocation step during translation elongation. During this step, the ribosome changes from the pre-translocational (PRE) to the post-translocational (POST) state as the newly formed A-site-bound peptidyl-tRNA and P-site-bound deacylated tRNA move to the P and E sites, respectively. Catalyzes the coordinated movement of the two tRNA molecules, the mRNA and conformational changes in the ribosome. This is Elongation factor G 2 from Methylococcus capsulatus (strain ATCC 33009 / NCIMB 11132 / Bath).